Here is a 177-residue protein sequence, read N- to C-terminus: Large ribosomal subunit protein uL6 (177 aa).

Belongs to the universal ribosomal protein uL6 family. As to quaternary structure, part of the 50S ribosomal subunit.

Its function is as follows. This protein binds to the 23S rRNA, and is important in its secondary structure. It is located near the subunit interface in the base of the L7/L12 stalk, and near the tRNA binding site of the peptidyltransferase center. The polypeptide is Large ribosomal subunit protein uL6 (Roseobacter denitrificans (strain ATCC 33942 / OCh 114) (Erythrobacter sp. (strain OCh 114))).